A 168-amino-acid chain; its full sequence is Peptide deformylase 1 (168 aa).

Fe cation-binding residues include Cys-91 and His-133. Residue Glu-134 is part of the active site. His-137 contributes to the Fe cation binding site.

The protein belongs to the polypeptide deformylase family. It depends on Fe(2+) as a cofactor.

The catalysed reaction is N-terminal N-formyl-L-methionyl-[peptide] + H2O = N-terminal L-methionyl-[peptide] + formate. Functionally, removes the formyl group from the N-terminal Met of newly synthesized proteins. Requires at least a dipeptide for an efficient rate of reaction. N-terminal L-methionine is a prerequisite for activity but the enzyme has broad specificity at other positions. The sequence is that of Peptide deformylase 1 from Shewanella oneidensis (strain ATCC 700550 / JCM 31522 / CIP 106686 / LMG 19005 / NCIMB 14063 / MR-1).